Reading from the N-terminus, the 432-residue chain is MVVDTEYYDLLGVSTTASSIEIKKAYRKKSIQEHPDKNPNDPTATERFQAISEAYQVLGDDDLRAKYDKYGRKEAIPQGGFEDAAEQFSVIFGGDAFASYIGELMLLKNLQKTEELNAEDEAEKEKENVETMEESPADGKTNGTTNAVDAALGNTNEKDDKNKARTTSGNLTVHDGNKKNEQVGAEAKKKKTKLEQFEEEQEVEKQKRVDQLSKTLIERLSILTESVYDDACKDSFKKKFEEEANLLKMESFGLDILHTIGDVYYEKAEIFLASQNLFGMGGIFHSMKAKGGVFMDTLRTVSAAIDAQNTMKELEKMKEASTNNEPLFDKDGNEQIKPTTEELAQQEQLLMGKVLSAAWHGSKYEITSTLRGVCKKVLEDDSVSKKTLIRRAEAMKLLGEVFKKTFRTKVEQEEAQIFEELVAEATKKKRHT.

Positions 4–73 constitute a J domain; that stretch reads DTEYYDLLGV…RAKYDKYGRK (70 aa). The segment at 117-187 is disordered; the sequence is NAEDEAEKEK…KKNEQVGAEA (71 aa).

The protein belongs to the DnaJ family. Interacts with SLN1.

The protein localises to the cytoplasm. Functionally, required for peroxisomal protein import which maintains the function of peroxisomes. This is DnaJ-like protein 1 (DJP1) from Saccharomyces cerevisiae (strain ATCC 204508 / S288c) (Baker's yeast).